The primary structure comprises 125 residues: Small ribosomal subunit protein uS12 (125 aa).

3-methylthioaspartic acid is present on aspartate 89. Residues 100–125 are disordered; it reads GSLDTQGVKDRKQSRSKYGAKRPKAA. Residues 113–125 are compositionally biased toward basic residues; that stretch reads SRSKYGAKRPKAA.

Belongs to the universal ribosomal protein uS12 family. Part of the 30S ribosomal subunit. Contacts proteins S8 and S17. May interact with IF1 in the 30S initiation complex.

With S4 and S5 plays an important role in translational accuracy. Its function is as follows. Interacts with and stabilizes bases of the 16S rRNA that are involved in tRNA selection in the A site and with the mRNA backbone. Located at the interface of the 30S and 50S subunits, it traverses the body of the 30S subunit contacting proteins on the other side and probably holding the rRNA structure together. The combined cluster of proteins S8, S12 and S17 appears to hold together the shoulder and platform of the 30S subunit. The sequence is that of Small ribosomal subunit protein uS12 from Dechloromonas aromatica (strain RCB).